The primary structure comprises 73 residues: Translation initiation factor IF-1 (73 aa).

Residues 1–73 enclose the S1-like domain; it reads MAKKEDTIVL…TKARVVYRHR (73 aa).

The protein belongs to the IF-1 family. Component of the 30S ribosomal translation pre-initiation complex which assembles on the 30S ribosome in the order IF-2 and IF-3, IF-1 and N-formylmethionyl-tRNA(fMet); mRNA recruitment can occur at any time during PIC assembly.

Its subcellular location is the cytoplasm. One of the essential components for the initiation of protein synthesis. Stabilizes the binding of IF-2 and IF-3 on the 30S subunit to which N-formylmethionyl-tRNA(fMet) subsequently binds. Helps modulate mRNA selection, yielding the 30S pre-initiation complex (PIC). Upon addition of the 50S ribosomal subunit IF-1, IF-2 and IF-3 are released leaving the mature 70S translation initiation complex. The protein is Translation initiation factor IF-1 of Chlamydia muridarum (strain MoPn / Nigg).